The sequence spans 339 residues: Quinolinate synthase (339 aa).

The iminosuccinate site is built by histidine 63 and serine 81. Cysteine 126 contacts [4Fe-4S] cluster. Residues 152–154 (YVN) and serine 169 each bind iminosuccinate. [4Fe-4S] cluster is bound at residue cysteine 211. Residues 237 to 239 (HPE) and threonine 254 each bind iminosuccinate. Cysteine 297 lines the [4Fe-4S] cluster pocket.

Belongs to the quinolinate synthase family. Type 2 subfamily. [4Fe-4S] cluster is required as a cofactor.

It localises to the cytoplasm. It catalyses the reaction iminosuccinate + dihydroxyacetone phosphate = quinolinate + phosphate + 2 H2O + H(+). It participates in cofactor biosynthesis; NAD(+) biosynthesis; quinolinate from iminoaspartate: step 1/1. In terms of biological role, catalyzes the condensation of iminoaspartate with dihydroxyacetone phosphate to form quinolinate. The chain is Quinolinate synthase from Xylella fastidiosa (strain Temecula1 / ATCC 700964).